The chain runs to 361 residues: Phosphoserine aminotransferase (361 aa).

Position 42 (arginine 42) interacts with L-glutamate. Residues 76–77 (AR), tryptophan 102, threonine 153, aspartate 173, and glutamine 196 contribute to the pyridoxal 5'-phosphate site. Lysine 197 is subject to N6-(pyridoxal phosphate)lysine. 238–239 (NT) provides a ligand contact to pyridoxal 5'-phosphate.

Belongs to the class-V pyridoxal-phosphate-dependent aminotransferase family. SerC subfamily. As to quaternary structure, homodimer. Pyridoxal 5'-phosphate serves as cofactor.

It localises to the cytoplasm. The enzyme catalyses O-phospho-L-serine + 2-oxoglutarate = 3-phosphooxypyruvate + L-glutamate. It carries out the reaction 4-(phosphooxy)-L-threonine + 2-oxoglutarate = (R)-3-hydroxy-2-oxo-4-phosphooxybutanoate + L-glutamate. Its pathway is amino-acid biosynthesis; L-serine biosynthesis; L-serine from 3-phospho-D-glycerate: step 2/3. It participates in cofactor biosynthesis; pyridoxine 5'-phosphate biosynthesis; pyridoxine 5'-phosphate from D-erythrose 4-phosphate: step 3/5. Its function is as follows. Catalyzes the reversible conversion of 3-phosphohydroxypyruvate to phosphoserine and of 3-hydroxy-2-oxo-4-phosphonooxybutanoate to phosphohydroxythreonine. This is Phosphoserine aminotransferase from Buchnera aphidicola subsp. Schizaphis graminum (strain Sg).